Reading from the N-terminus, the 282-residue chain is ATP synthase gamma chain (282 aa).

This sequence belongs to the ATPase gamma chain family. In terms of assembly, F-type ATPases have 2 components, CF(1) - the catalytic core - and CF(0) - the membrane proton channel. CF(1) has five subunits: alpha(3), beta(3), gamma(1), delta(1), epsilon(1). CF(0) has three main subunits: a, b and c. In this bacterium the a and b subunits are transcribed but do not seem to be translated, thus the ATP synthase consists of the alpha, beta, gamma, delta, epsilon and c subunits.

The protein localises to the cell membrane. Its function is as follows. Produces ATP from ADP in the presence of a proton gradient across the membrane. The gamma chain is believed to be important in regulating ATPase activity and the flow of protons through the CF(0) complex. The chain is ATP synthase gamma chain from Moorella thermoacetica (strain ATCC 39073 / JCM 9320).